Here is a 289-residue protein sequence, read N- to C-terminus: BTB/POZ domain-containing protein KCTD7 (289 aa).

Positions 1–10 (MVVVTGQSKG) are enriched in polar residues. The segment at 1-35 (MVVVTGQSKGSGDPDEAMSSSDAEDDFQEPATPTA) is disordered. In terms of domain architecture, BTB spans 51–149 (EVVPLNVGGM…HLEDVQPLKG (99 aa)).

The protein localises to the cell membrane. Its subcellular location is the cytoplasm. It localises to the cytosol. May be involved in the control of excitability of cortical neurons. The protein is BTB/POZ domain-containing protein KCTD7 (KCTD7) of Gallus gallus (Chicken).